The primary structure comprises 772 residues: Polyribonucleotide nucleotidyltransferase (772 aa).

Mg(2+) contacts are provided by Asp-486 and Asp-492. Residues 553 to 612 (PRIETLQIDKSKIRDVIGTGGKVIREIVATTGAKVDIDDEGLIKISSSDLTQIEAAKNWI) enclose the KH domain. The 69-residue stretch at 622 to 690 (GKIYKGKVVN…QRGKVRLSMR (69 aa)) folds into the S1 motif domain. Positions 695–772 (ETGAELEDTR…HMPAFLKSDD (78 aa)) are disordered. Over residues 701–760 (EDTRPPREPREPRGDRGDRGDRGDRRGPRGDRGPRREGGDRGPRREGGDRPRRDRDDGPA) the composition is skewed to basic and acidic residues.

It belongs to the polyribonucleotide nucleotidyltransferase family. The cofactor is Mg(2+).

It localises to the cytoplasm. The enzyme catalyses RNA(n+1) + phosphate = RNA(n) + a ribonucleoside 5'-diphosphate. Involved in mRNA degradation. Catalyzes the phosphorolysis of single-stranded polyribonucleotides processively in the 3'- to 5'-direction. This is Polyribonucleotide nucleotidyltransferase from Novosphingobium aromaticivorans (strain ATCC 700278 / DSM 12444 / CCUG 56034 / CIP 105152 / NBRC 16084 / F199).